The sequence spans 246 residues: FAD synthetase (246 aa).

The protein belongs to the RibF family.

It carries out the reaction FMN + ATP + H(+) = FAD + diphosphate. Its pathway is cofactor biosynthesis; FAD biosynthesis; FAD from FMN: step 1/1. Its function is as follows. Catalyzes the adenylation of flavin mononucleotide (FMN) to form flavin adenine dinucleotide (FAD) coenzyme. Can also catalyze, with lower efficiency, the adenylation of the toxic riboflavin analogs 8-demethyl-8-aminoriboflavin mononucleotide (AFMN) and roseoflavin mononucleotide (RoFMN) to 8-demethyl-8-aminoriboflavin adenine dinucleotide (AFAD) and roseoflavin adenine dinucleotide (RoFAD), respectively. This is FAD synthetase from Listeria monocytogenes serovar 1/2a (strain ATCC BAA-679 / EGD-e).